Reading from the N-terminus, the 468-residue chain is ATP synthase subunit beta (468 aa).

ATP is bound at residue 150-157 (GGAGVGKT).

The protein belongs to the ATPase alpha/beta chains family. F-type ATPases have 2 components, CF(1) - the catalytic core - and CF(0) - the membrane proton channel. CF(1) has five subunits: alpha(3), beta(3), gamma(1), delta(1), epsilon(1). CF(0) has three main subunits: a(1), b(2) and c(9-12). The alpha and beta chains form an alternating ring which encloses part of the gamma chain. CF(1) is attached to CF(0) by a central stalk formed by the gamma and epsilon chains, while a peripheral stalk is formed by the delta and b chains.

Its subcellular location is the cell inner membrane. It carries out the reaction ATP + H2O + 4 H(+)(in) = ADP + phosphate + 5 H(+)(out). Produces ATP from ADP in the presence of a proton gradient across the membrane. The catalytic sites are hosted primarily by the beta subunits. The chain is ATP synthase subunit beta from Acidovorax ebreus (strain TPSY) (Diaphorobacter sp. (strain TPSY)).